A 378-amino-acid chain; its full sequence is MTTEEESLSAAEEGYNVQRDYWRQAEESDGFDIENIKLPPGMHGRVMGLITYNCQLCYRYPFPVLVKLYAKFGLHRYNLIKGTSFELAALMKFNMLQNYMSSFYMTLLAHDPDPAASSSQKTFQVRVDEQQFGTLGINCSIARPKHEGDLLEVSTKTPFIPHFHGGALGDGIFKGELPDCLSDDALNALMEAVSKDELPEHVLDDALYARAGGIFQGELPDWPSDDALNDGKRFYMLKESEWQATDWISMYLELVITTTDRSITETVQKPEVLSKLEIVKVAIETATKDEEPSNERLKAYRAHFYITFKGLAEPRAPRQVFEIGEHVERQAIVRRVMGHRGDLTLKGKLCGGQYIKRRSLALKSGEESPNCKKQTRVG.

Belongs to the UPF0725 (EMB2204) family.

In Arabidopsis thaliana (Mouse-ear cress), this protein is UPF0725 protein At1g23970.